The primary structure comprises 112 residues: Protein lin-52 homolog (112 aa).

Belongs to the lin-52 family. In terms of assembly, component of the DREAM complex.

The protein is Protein lin-52 homolog (lin52) of Tetraodon nigroviridis (Spotted green pufferfish).